We begin with the raw amino-acid sequence, 141 residues long: Nucleoside diphosphate kinase (141 aa).

ATP is bound by residues Lys-11, Phe-59, Arg-87, Thr-93, Arg-104, and Asn-114. His-117 (pros-phosphohistidine intermediate) is an active-site residue.

The protein belongs to the NDK family. As to quaternary structure, homotetramer. It depends on Mg(2+) as a cofactor.

The protein resides in the cytoplasm. It carries out the reaction a 2'-deoxyribonucleoside 5'-diphosphate + ATP = a 2'-deoxyribonucleoside 5'-triphosphate + ADP. The enzyme catalyses a ribonucleoside 5'-diphosphate + ATP = a ribonucleoside 5'-triphosphate + ADP. Functionally, major role in the synthesis of nucleoside triphosphates other than ATP. The ATP gamma phosphate is transferred to the NDP beta phosphate via a ping-pong mechanism, using a phosphorylated active-site intermediate. In Alkalilimnicola ehrlichii (strain ATCC BAA-1101 / DSM 17681 / MLHE-1), this protein is Nucleoside diphosphate kinase.